Reading from the N-terminus, the 197-residue chain is Adenylyl-sulfate kinase (197 aa).

33-40 (GLSGSGKS) is a binding site for ATP. Ser-107 serves as the catalytic Phosphoserine intermediate.

Belongs to the APS kinase family.

It carries out the reaction adenosine 5'-phosphosulfate + ATP = 3'-phosphoadenylyl sulfate + ADP + H(+). The protein operates within sulfur metabolism; hydrogen sulfide biosynthesis; sulfite from sulfate: step 2/3. Catalyzes the synthesis of activated sulfate. The polypeptide is Adenylyl-sulfate kinase (Bacillus licheniformis (strain ATCC 14580 / DSM 13 / JCM 2505 / CCUG 7422 / NBRC 12200 / NCIMB 9375 / NCTC 10341 / NRRL NRS-1264 / Gibson 46)).